Consider the following 169-residue polypeptide: Regulator of sigma D (169 aa).

The protein belongs to the Rsd/AlgQ family. Interacts with RpoD.

The protein resides in the cytoplasm. Its function is as follows. Binds RpoD and negatively regulates RpoD-mediated transcription activation by preventing the interaction between the primary sigma factor RpoD with the catalytic core of the RNA polymerase and with promoter DNA. May be involved in replacement of the RNA polymerase sigma subunit from RpoD to RpoS during the transition from exponential growth to the stationary phase. The protein is Regulator of sigma D of Yersinia pseudotuberculosis serotype O:1b (strain IP 31758).